A 134-amino-acid polypeptide reads, in one-letter code: Transcription antitermination protein NusB (134 aa).

The protein belongs to the NusB family.

In terms of biological role, involved in transcription antitermination. Required for transcription of ribosomal RNA (rRNA) genes. Binds specifically to the boxA antiterminator sequence of the ribosomal RNA (rrn) operons. The chain is Transcription antitermination protein NusB from Halalkalibacterium halodurans (strain ATCC BAA-125 / DSM 18197 / FERM 7344 / JCM 9153 / C-125) (Bacillus halodurans).